Here is a 414-residue protein sequence, read N- to C-terminus: Phthiocerol/phthiodiolone dimycocerosyl transferase (414 aa).

His-118 (proton acceptor) is an active-site residue.

The protein belongs to the acyltransferase PapA5 family. As to quaternary structure, monomer. Interacts directly with the acyl carrier protein (ACP) domain of the mycocerosic acid synthase (mas) protein.

It catalyses the reaction 2 a mycocerosyl-[mycocerosic acid synthase] + a phthiocerol = a dimycocerosyl phthiocerol + 2 holo-[mycocerosic acid synthase].. It carries out the reaction 2 a mycocerosyl-[mycocerosic acid synthase] + a phthiodiolone = a dimycocerosyl phthiodiolone + 2 holo-[mycocerosic acid synthase].. The enzyme catalyses 2 a mycocerosyl-[mycocerosic acid synthase] + a phenolphthiocerol = a dimycocerosyl phenolphthiocerol + 2 holo-[mycocerosic acid synthase].. In terms of biological role, catalyzes diesterification of phthiocerol, phthiodiolone, and phenolphthiocerol with mycocerosic acids, the final step in the phthiocerol, phthiodiolone and phenolphthiocerol dimycocerosate esters (PDIM) synthesis. Can directly transfer the mycocerosate bound to the mycocerosic acid synthase (mas) onto the substrate alcohols. This Mycobacterium ulcerans (strain Agy99) protein is Phthiocerol/phthiodiolone dimycocerosyl transferase (papA5).